Consider the following 642-residue polypeptide: Phosphomethylpyrimidine synthase (642 aa).

Substrate contacts are provided by residues Asn-235, Met-264, Tyr-293, His-329, 349-351, 390-393, and Glu-429; these read SRG and DGLR. A Zn(2+)-binding site is contributed by His-433. Tyr-456 is a substrate binding site. His-497 contributes to the Zn(2+) binding site. Residues Cys-577, Cys-580, and Cys-585 each coordinate [4Fe-4S] cluster.

It belongs to the ThiC family. Homodimer. [4Fe-4S] cluster serves as cofactor.

The enzyme catalyses 5-amino-1-(5-phospho-beta-D-ribosyl)imidazole + S-adenosyl-L-methionine = 4-amino-2-methyl-5-(phosphooxymethyl)pyrimidine + CO + 5'-deoxyadenosine + formate + L-methionine + 3 H(+). It functions in the pathway cofactor biosynthesis; thiamine diphosphate biosynthesis. Its function is as follows. Catalyzes the synthesis of the hydroxymethylpyrimidine phosphate (HMP-P) moiety of thiamine from aminoimidazole ribotide (AIR) in a radical S-adenosyl-L-methionine (SAM)-dependent reaction. This chain is Phosphomethylpyrimidine synthase, found in Alteromonas mediterranea (strain DSM 17117 / CIP 110805 / LMG 28347 / Deep ecotype).